Here is a 199-residue protein sequence, read N- to C-terminus: Recombination protein RecR (199 aa).

A C4-type zinc finger spans residues 58 to 73 (CSICCNITDTDPCSMC). One can recognise a Toprim domain in the interval 81-176 (SVICVVEDPR…KVTRIAHGLP (96 aa)).

It belongs to the RecR family.

In terms of biological role, may play a role in DNA repair. It seems to be involved in an RecBC-independent recombinational process of DNA repair. It may act with RecF and RecO. The protein is Recombination protein RecR of Clostridioides difficile (strain 630) (Peptoclostridium difficile).